The following is an 85-amino-acid chain: Turripeptide PaIAa (85 aa).

The protein belongs to the turripeptide family. As to expression, expressed by the venom duct.

Its subcellular location is the secreted. Functionally, is lethal to drosophila larvae. This is Turripeptide PaIAa from Polystira albida (White giant-turris).